Reading from the N-terminus, the 218-residue chain is Pyridoxine/pyridoxamine 5'-phosphate oxidase (218 aa).

Residues 14–17 (RREY) and K72 contribute to the substrate site. Residues 67–72 (RIVLLK), 82–83 (YT), R88, K89, and Q111 each bind FMN. Substrate is bound by residues Y129, R133, and S137. Residues 146 to 147 (QS) and W191 contribute to the FMN site. 197–199 (RLH) provides a ligand contact to substrate. Residue R201 participates in FMN binding.

This sequence belongs to the pyridoxamine 5'-phosphate oxidase family. Homodimer. FMN serves as cofactor.

It carries out the reaction pyridoxamine 5'-phosphate + O2 + H2O = pyridoxal 5'-phosphate + H2O2 + NH4(+). It catalyses the reaction pyridoxine 5'-phosphate + O2 = pyridoxal 5'-phosphate + H2O2. The protein operates within cofactor metabolism; pyridoxal 5'-phosphate salvage; pyridoxal 5'-phosphate from pyridoxamine 5'-phosphate: step 1/1. Its pathway is cofactor metabolism; pyridoxal 5'-phosphate salvage; pyridoxal 5'-phosphate from pyridoxine 5'-phosphate: step 1/1. Catalyzes the oxidation of either pyridoxine 5'-phosphate (PNP) or pyridoxamine 5'-phosphate (PMP) into pyridoxal 5'-phosphate (PLP). This Salmonella typhi protein is Pyridoxine/pyridoxamine 5'-phosphate oxidase.